A 487-amino-acid chain; its full sequence is GTPase Der (487 aa).

2 consecutive EngA-type G domains span residues 3–166 (PVIA…PRDA) and 193–366 (IKIA…QSAV). GTP is bound by residues 9–16 (GRPNVGKS), 56–60 (DTGGI), 118–121 (NKID), 199–206 (GRPNVGKS), 246–250 (DTAGV), and 311–314 (NKWD). A KH-like domain is found at 367-451 (TRWPTSRLTQ…PIRIEYKGGE (85 aa)). Residues 448–461 (KGGENPYEGKKNTL) are compositionally biased toward basic and acidic residues. A disordered region spans residues 448–487 (KGGENPYEGKKNTLTDRQVNKKRRLMSHHKKAEKKRRDKR). Residues 467-487 (NKKRRLMSHHKKAEKKRRDKR) show a composition bias toward basic residues.

It belongs to the TRAFAC class TrmE-Era-EngA-EngB-Septin-like GTPase superfamily. EngA (Der) GTPase family. Associates with the 50S ribosomal subunit.

Functionally, GTPase that plays an essential role in the late steps of ribosome biogenesis. In Pseudomonas putida (strain ATCC 700007 / DSM 6899 / JCM 31910 / BCRC 17059 / LMG 24140 / F1), this protein is GTPase Der.